A 161-amino-acid chain; its full sequence is Dihydrofolate reductase (161 aa).

Positions 2–157 (TLSIIVAHDK…IPHTFLHLVR (156 aa)) constitute a DHFR domain. 6–8 (IVA) provides a ligand contact to substrate. NADP(+)-binding positions include 7–8 (VA) and 15–20 (IGYQNQ). Position 28 (D28) interacts with substrate. 44–47 (GRKT) serves as a coordination point for NADP(+). Substrate is bound at residue R58. NADP(+) contacts are provided by residues 63–66 (LTNQ) and 93–98 (FGGQTL). Position 112 (T112) interacts with substrate.

The protein belongs to the dihydrofolate reductase family.

The catalysed reaction is (6S)-5,6,7,8-tetrahydrofolate + NADP(+) = 7,8-dihydrofolate + NADPH + H(+). It participates in cofactor biosynthesis; tetrahydrofolate biosynthesis; 5,6,7,8-tetrahydrofolate from 7,8-dihydrofolate: step 1/1. In terms of biological role, key enzyme in folate metabolism. Catalyzes an essential reaction for de novo glycine and purine synthesis, and for DNA precursor synthesis. The sequence is that of Dihydrofolate reductase (folA) from Staphylococcus epidermidis.